A 404-amino-acid polypeptide reads, in one-letter code: MNQTLEEVVSLARQCGCGHRHYDIPIEQMVVGREAFARLVAYLRHKRYERVAIVADDHTFAAVERSLCDQLENGSIRYTVCLVQPDENGDVIADERSIVQVLLETPDDVDVLIAVGAGTIHDITRFSSYKMRIPFISVPTAPSVDGFTSMGAPLIIRGVKKTIQAQAPIAVFAHTGVLCQSPKEMIAAGFGDMVAKYTSLADWQFAHWMADEPYCPFVHQLTEQSLQTCVDHIDDIAAGGEQGIRVLMDALLQSGIAMLLMGQSYSASGAEHHLSHYWEMEFLRQKKRQVLHGAKVGVSTPIIIEHYQRVFWPLLNELEKRPKSMDEATWERLKANTASIRELLESLPSPERIRTMLAKVGGAIAPEQLGIDPQLVERSLREAHRLRLNRFTMLYFLNELIFVE.

Residues Asp-56, 118–122 (GTIHD), and 140–143 (TAPS) contribute to the NAD(+) site. Asp-145 contacts substrate. An NAD(+)-binding site is contributed by Ser-149. Asp-192 lines the substrate pocket. Ni(2+) is bound by residues Asp-192 and His-272. His-276 provides a ligand contact to substrate. His-292 contributes to the Ni(2+) binding site.

Belongs to the glycerol-1-phosphate dehydrogenase family. Homodimer. Requires Ni(2+) as cofactor.

Its subcellular location is the cytoplasm. The catalysed reaction is sn-glycerol 1-phosphate + NAD(+) = dihydroxyacetone phosphate + NADH + H(+). It carries out the reaction sn-glycerol 1-phosphate + NADP(+) = dihydroxyacetone phosphate + NADPH + H(+). Catalyzes the NAD(P)H-dependent reduction of dihydroxyacetonephosphate (DHAP or glycerone phosphate) to glycerol 1-phosphate (G1P). The G1P thus generated is probably used for the synthesis of phosphoglycerolipids in Gram-positive bacterial species. The protein is Glycerol-1-phosphate dehydrogenase [NAD(P)+] of Geobacillus stearothermophilus (Bacillus stearothermophilus).